We begin with the raw amino-acid sequence, 289 residues long: Phosphatidylserine decarboxylase proenzyme (289 aa).

Active-site charge relay system; for autoendoproteolytic cleavage activity residues include aspartate 89, histidine 146, and serine 252. Residue serine 252 is the Schiff-base intermediate with substrate; via pyruvic acid; for decarboxylase activity of the active site. The residue at position 252 (serine 252) is a Pyruvic acid (Ser); by autocatalysis.

The protein belongs to the phosphatidylserine decarboxylase family. PSD-B subfamily. Prokaryotic type I sub-subfamily. As to quaternary structure, heterodimer of a large membrane-associated beta subunit and a small pyruvoyl-containing alpha subunit. It depends on pyruvate as a cofactor. In terms of processing, is synthesized initially as an inactive proenzyme. Formation of the active enzyme involves a self-maturation process in which the active site pyruvoyl group is generated from an internal serine residue via an autocatalytic post-translational modification. Two non-identical subunits are generated from the proenzyme in this reaction, and the pyruvate is formed at the N-terminus of the alpha chain, which is derived from the carboxyl end of the proenzyme. The autoendoproteolytic cleavage occurs by a canonical serine protease mechanism, in which the side chain hydroxyl group of the serine supplies its oxygen atom to form the C-terminus of the beta chain, while the remainder of the serine residue undergoes an oxidative deamination to produce ammonia and the pyruvoyl prosthetic group on the alpha chain. During this reaction, the Ser that is part of the protease active site of the proenzyme becomes the pyruvoyl prosthetic group, which constitutes an essential element of the active site of the mature decarboxylase.

The protein resides in the cell membrane. The catalysed reaction is a 1,2-diacyl-sn-glycero-3-phospho-L-serine + H(+) = a 1,2-diacyl-sn-glycero-3-phosphoethanolamine + CO2. The protein operates within phospholipid metabolism; phosphatidylethanolamine biosynthesis; phosphatidylethanolamine from CDP-diacylglycerol: step 2/2. In terms of biological role, catalyzes the formation of phosphatidylethanolamine (PtdEtn) from phosphatidylserine (PtdSer). The polypeptide is Phosphatidylserine decarboxylase proenzyme (Nitrosospira multiformis (strain ATCC 25196 / NCIMB 11849 / C 71)).